The chain runs to 315 residues: Heme oxygenase 2 (315 aa).

Acidic residues predominate over residues methionine 1–aspartate 12. Positions methionine 1 to lysine 28 are disordered. Serine 2 carries the post-translational modification N-acetylserine. Serine 2 is modified (phosphoserine). Topologically, residues serine 2–serine 294 are cytoplasmic. Residues glutamate 13–lysine 28 show a composition bias toward basic and acidic residues. Heme b is bound by residues histidine 44, tyrosine 153, lysine 198, and arginine 202. HRM repeat units follow at residues lysine 263–alanine 268 and asparagine 280–threonine 285. S-nitrosocysteine occurs at positions 264 and 281. The chain crosses the membrane as a helical; Anchor for type IV membrane protein span at residues leucine 295–methionine 315.

Belongs to the heme oxygenase family. A soluble form arises by proteolytic removal of the membrane anchor. Post-translationally, S-nitrosylated by BLVRB. As to expression, ubiquitous.

The protein localises to the microsome membrane. The protein resides in the endoplasmic reticulum membrane. It carries out the reaction heme b + 3 reduced [NADPH--hemoprotein reductase] + 3 O2 = biliverdin IXalpha + CO + Fe(2+) + 3 oxidized [NADPH--hemoprotein reductase] + 3 H2O + H(+). In terms of biological role, catalyzes the oxidative cleavage of heme at the alpha-methene bridge carbon, released as carbon monoxide (CO), to generate biliverdin IXalpha, while releasing the central heme iron chelate as ferrous iron. This Mus musculus (Mouse) protein is Heme oxygenase 2 (Hmox2).